The sequence spans 490 residues: Cytochrome P450 2C55 (490 aa).

Cys435 lines the heme pocket.

Belongs to the cytochrome P450 family. It depends on heme as a cofactor. In terms of tissue distribution, highest level in colon. Low levels in liver and small intestine.

The protein resides in the endoplasmic reticulum membrane. It is found in the microsome membrane. It carries out the reaction an organic molecule + reduced [NADPH--hemoprotein reductase] + O2 = an alcohol + oxidized [NADPH--hemoprotein reductase] + H2O + H(+). Functionally, metabolizes arachidonic acid mainly to 19-hydroxyeicosatetraenoic acid (HETE). The protein is Cytochrome P450 2C55 of Mus musculus (Mouse).